We begin with the raw amino-acid sequence, 549 residues long: MTDISYYNNEIDKILWNILGDDYFTQDEFDDLVNSVANTIYQYDNEVSIDKLKVIIEFVILNKFKICYIYDNDSILNQVKYEKKSVGSKTIGKNSTNDDEDDDEDIAVIKLSDIEAGENWFKKSPKISSKQFQSVDKVEVATYEDLISHKHDYPKEIYKESHYIRRNTRLDVIKKIPQFEQKSKEWLKQRTESLTATAISVVFDEDPYKHPIVILLDKCGRGLPFVENKFVHHGNKYEQIGTMFYSFRNNVEVGEYGLLQHSGHKFIAASPDGICSKKANTGGLSKLVGRLLEIKFPFSREINNSGDLDGDICPHYYFLQVQTQLYVTEMDECDFLQCKIDEYDSWEDFVKDSNPIVPGLSKTTNLEKGCLIQLSDKNLIGSDDKEKCLYNSKYIYPPKLHMTNEEIEKWISSEIMNYHNNDLSENYMIDRVIYWRLSQVTCNLIKLNKEAFEEKIPLLQQFWDYVLFYRQHSDKLDKLIKFVEKVKEDNSAEIFSYINEDFLSLNKDSKYEPLYQEETEWRKKYNQIKAKKAQMYKNKSYNKYTKFSN.

This is an uncharacterized protein from Acanthamoeba polyphaga (Amoeba).